Consider the following 245-residue polypeptide: GATA zinc finger domain-containing protein 1 (245 aa).

A GATA-type zinc finger spans residues 9–33 (CSMCKTNTSSMWKKGSQGEILCNNC). Residues 39-70 (TAAGGNNNNNSSSSTSGSSSYTGTTFASTSTS) show a composition bias toward low complexity. The disordered stretch occupies residues 39-110 (TAAGGNNNNN…PAAEKKVSTK (72 aa)). Positions 71–80 (QQSNGGNTKQ) are enriched in polar residues.

It is found in the nucleus. Functionally, component of some chromatin complex recruited to chromatin sites methylated 'Lys-4' of histone H3 (H3K4me), with a preference for trimethylated form (H3K4me3). In Xenopus laevis (African clawed frog), this protein is GATA zinc finger domain-containing protein 1 (gatad1).